Consider the following 428-residue polypeptide: Stromal membrane-associated protein 2 (428 aa).

An Arf-GAP domain is found at 13 to 139 (QAVLANLLLE…INVLRKEKDD (127 aa)). A C4-type zinc finger spans residues 28–51 (CADCQSKGPRWASWNIGVFICIRC). Phosphoserine occurs at positions 127, 219, 224, 230, and 239. The interaction with clathrin heavy chains stretch occupies residues 163-231 (MPQKKEDAQL…SVSRKAVGSM (69 aa)). Positions 218-262 (PSPSSVSRKAVGSMPTAGSAGSVPENLNLFPEPGSKSEETGKKQL) are disordered. Basic and acidic residues predominate over residues 252 to 262 (SKSEETGKKQL). The tract at residues 339-428 (MGGMQASMMG…NQTLSPQMWK (90 aa)) is interaction with PICALM.

In terms of assembly, interacts with ARF1. Interacts with PICALM and clathrin heavy chains.

The protein localises to the cytoplasm. Functionally, GTPase activating protein that acts on ARF1. Can also activate ARF6 (in vitro). May play a role in clathrin-dependent retrograde transport from early endosomes to the trans-Golgi network. This chain is Stromal membrane-associated protein 2 (Smap2), found in Mus musculus (Mouse).